A 332-amino-acid polypeptide reads, in one-letter code: Anthranilate phosphoribosyltransferase (332 aa).

Residues G79, 82–83 (GD), S87, 89–92 (NIST), 107–115 (KHGNRSVSS), and S119 each bind 5-phospho-alpha-D-ribose 1-diphosphate. G79 is an anthranilate binding site. S91 contributes to the Mg(2+) binding site. N110 is an anthranilate binding site. An anthranilate-binding site is contributed by R165. Positions 223 and 224 each coordinate Mg(2+).

Belongs to the anthranilate phosphoribosyltransferase family. As to quaternary structure, homodimer. It depends on Mg(2+) as a cofactor.

The enzyme catalyses N-(5-phospho-beta-D-ribosyl)anthranilate + diphosphate = 5-phospho-alpha-D-ribose 1-diphosphate + anthranilate. The protein operates within amino-acid biosynthesis; L-tryptophan biosynthesis; L-tryptophan from chorismate: step 2/5. In terms of biological role, catalyzes the transfer of the phosphoribosyl group of 5-phosphorylribose-1-pyrophosphate (PRPP) to anthranilate to yield N-(5'-phosphoribosyl)-anthranilate (PRA). This Serratia proteamaculans (strain 568) protein is Anthranilate phosphoribosyltransferase.